The following is a 342-amino-acid chain: MITFSNPWIGVIIPCIIIFTLSTFSAIYILPHHVSNNELTLFICASAMVWISYIIAIIVPPGSPPKNYTPPENGMKMYCLKCKAYKPERTHHSKALGVCVLKMDHHCPWTNNTVGHRNMPHFMRFLVWVDMTVGYLFIRLCIRIMKLWRDKHLPSYLFDKTEVILSIVFLPASFFVLFTVGILTIRVFVNMCNGITQIESWECDRIESLVRRKIVTEERAEFPYDIELFTNIFNAVGSPLTFWLPWGQPRGDGITFEKNESGYTEEGEPLCWPPDHVDYDPENVPLQNLKDGLRRRGEEPDCLLGGIGAGKMQAENDFYKRDHWRNVEGEKLADFGVEHTDI.

At 1–8 (MITFSNPW) the chain is on the cytoplasmic side. A helical transmembrane segment spans residues 9-29 (IGVIIPCIIIFTLSTFSAIYI). Over 30-38 (LPHHVSNNE) the chain is Lumenal. The helical transmembrane segment at 39–59 (LTLFICASAMVWISYIIAIIV) threads the bilayer. Residues 60–124 (PPGSPPKNYT…GHRNMPHFMR (65 aa)) are Cytoplasmic-facing. Positions 77-127 (MYCLKCKAYKPERTHHSKALGVCVLKMDHHCPWTNNTVGHRNMPHFMRFLV) constitute a DHHC domain. Residue C107 is the S-palmitoyl cysteine intermediate of the active site. A helical transmembrane segment spans residues 125 to 145 (FLVWVDMTVGYLFIRLCIRIM). The Lumenal segment spans residues 146–162 (KLWRDKHLPSYLFDKTE). A helical membrane pass occupies residues 163–183 (VILSIVFLPASFFVLFTVGIL). Topologically, residues 184–342 (TIRVFVNMCN…ADFGVEHTDI (159 aa)) are cytoplasmic.

Belongs to the DHHC palmitoyltransferase family. PFA4 subfamily.

It localises to the endoplasmic reticulum membrane. The enzyme catalyses L-cysteinyl-[protein] + hexadecanoyl-CoA = S-hexadecanoyl-L-cysteinyl-[protein] + CoA. Mediates the reversible addition of palmitate to target proteins, thereby regulating their membrane association and biological function. The protein is Palmitoyltransferase PFA4 of Yarrowia lipolytica (strain CLIB 122 / E 150) (Yeast).